We begin with the raw amino-acid sequence, 264 residues long: Somatomedin-B and thrombospondin type-1 domain-containing protein (264 aa).

Residues 1–20 (MRTLWMALCALSRLWPGAQA) form the signal peptide. Positions 24–75 (EAGRCCPGRDPACFARGWRLDRVYGTCFCDQACRFTGDCCFDYDRACPARPC) constitute an SMB domain. Disulfide bonds link Cys-28–Cys-36, Cys-28–Cys-52, Cys-36–Cys-70, Cys-50–Cys-52, Cys-50–Cys-63, Cys-56–Cys-62, and Cys-63–Cys-70. In terms of domain architecture, TSP type-1 spans 74-127 (PCFVGEWSPWSGCADQCKPTTRVRRRSVQQEPQNGGAPCPPLEERAGCLEYSTP). An N-linked (GlcNAc...) asparagine glycan is attached at Asn-227.

The protein belongs to the thrombospondin family. As to expression, detected in aorta extracellular matrix (at protein level).

The protein localises to the secreted. It is found in the extracellular space. Its subcellular location is the extracellular matrix. This chain is Somatomedin-B and thrombospondin type-1 domain-containing protein (SBSPON), found in Homo sapiens (Human).